A 282-amino-acid polypeptide reads, in one-letter code: PAK4-inhibitor INKA1 (282 aa).

Disordered regions lie at residues 21 to 50 and 92 to 127; these read RDTG…QFRA and GFSE…FSVS. Inka box regions lie at residues 163 to 200 and 256 to 282; these read EAED…ELPE and PADI…VSYL.

This sequence belongs to the INKA family. In terms of assembly, interacts with PAK4. As to expression, expressed in tissues of the developing head during neurulation.

It is found in the nucleus. Its subcellular location is the cytoplasm. Its function is as follows. Inhibitor of the serine/threonine-protein kinase PAK4. Acts by binding PAK4 in a substrate-like manner, inhibiting the protein kinase activity. The chain is PAK4-inhibitor INKA1 from Mus musculus (Mouse).